The primary structure comprises 96 residues: Small ribosomal subunit protein bS18 (96 aa).

This sequence belongs to the bacterial ribosomal protein bS18 family. As to quaternary structure, part of the 30S ribosomal subunit. Forms a tight heterodimer with protein bS6.

Functionally, binds as a heterodimer with protein bS6 to the central domain of the 16S rRNA, where it helps stabilize the platform of the 30S subunit. This chain is Small ribosomal subunit protein bS18, found in Gluconobacter oxydans (strain 621H) (Gluconobacter suboxydans).